The primary structure comprises 1001 residues: RNA-binding protein 12B (1001 aa).

Phosphoserine is present on residues serine 98, serine 101, and serine 112. Residue lysine 114 forms a Glycyl lysine isopeptide (Lys-Gly) (interchain with G-Cter in SUMO2) linkage. The segment covering 119 to 128 has biased composition (polar residues); it reads NSGYGSSINQ. The tract at residues 119–147 is disordered; that stretch reads NSGYGSSINQDAGFHTNGTGHGNLRPRKT. Lysine 151 participates in a covalent cross-link: Glycyl lysine isopeptide (Lys-Gly) (interchain with G-Cter in SUMO2). Residues 155–230 form the RRM 1 domain; it reads PYLFLRGLPY…RFIEVMQGSE (76 aa). Positions 247-262 are enriched in basic and acidic residues; sequence LRRSEEHSPPRGINDR. A disordered region spans residues 247–278; the sequence is LRRSEEHSPPRGINDRHFRKRSHSKSPRRTRS. Phosphoserine is present on residues serine 250 and serine 254. The segment covering 263-278 has biased composition (basic residues); it reads HFRKRSHSKSPRRTRS. Residue threonine 276 is modified to Phosphothreonine. Residues serine 278, serine 280, serine 292, and serine 294 each carry the phosphoserine modification. The RRM 2 domain occupies 284 to 360; sequence FYVHLKNLSL…RPVHIDPISR (77 aa). Residue lysine 319 is modified to N6-acetyllysine. Residue lysine 335 forms a Glycyl lysine isopeptide (Lys-Gly) (interchain with G-Cter in SUMO2) linkage. A Phosphoserine modification is found at serine 377. An RRM 3 domain is found at 400–477; sequence LCIYIRNFPF…TEVLLRLISE (78 aa). Glycyl lysine isopeptide (Lys-Gly) (interchain with G-Cter in SUMO2) cross-links involve residues lysine 514 and lysine 541. Residues 544–587 are disordered; it reads QRDFRQPDRHPPEDFRHSSEDFRFPPEDFRHSPEDFRRPREEDF. Serine 575, serine 591, and serine 638 each carry phosphoserine. The segment covering 631–881 has biased composition (basic and acidic residues); the sequence is LEEDFRRSPT…FRSPPDDFRS (251 aa). The interval 631 to 882 is disordered; the sequence is LEEDFRRSPT…RSPPDDFRSH (252 aa). Threonine 640 bears the Phosphothreonine mark. Residues serine 710 and serine 718 each carry the phosphoserine modification. Residue lysine 895 forms a Glycyl lysine isopeptide (Lys-Gly) (interchain with G-Cter in SUMO2) linkage. The RRM 4 domain occupies 925–1001; the sequence is TPIKIMNLPF…GPRKVKLTLL (77 aa).

The protein is RNA-binding protein 12B (RBM12B) of Homo sapiens (Human).